Here is a 264-residue protein sequence, read N- to C-terminus: tRNA pseudouridine synthase A (264 aa).

The active-site Nucleophile is the Asp-51. A substrate-binding site is contributed by Tyr-109.

It belongs to the tRNA pseudouridine synthase TruA family. Homodimer.

It catalyses the reaction uridine(38/39/40) in tRNA = pseudouridine(38/39/40) in tRNA. Functionally, formation of pseudouridine at positions 38, 39 and 40 in the anticodon stem and loop of transfer RNAs. The chain is tRNA pseudouridine synthase A from Vibrio parahaemolyticus serotype O3:K6 (strain RIMD 2210633).